The sequence spans 597 residues: Elongation factor 4 (597 aa).

Residues 2 to 184 form the tr-type G domain; that stretch reads KNIRNFSIIA…EIVAKIPAPT (183 aa). Residues 14-19 and 131-134 contribute to the GTP site; these read DHGKST and NKID.

The protein belongs to the TRAFAC class translation factor GTPase superfamily. Classic translation factor GTPase family. LepA subfamily.

The protein localises to the cell inner membrane. It carries out the reaction GTP + H2O = GDP + phosphate + H(+). In terms of biological role, required for accurate and efficient protein synthesis under certain stress conditions. May act as a fidelity factor of the translation reaction, by catalyzing a one-codon backward translocation of tRNAs on improperly translocated ribosomes. Back-translocation proceeds from a post-translocation (POST) complex to a pre-translocation (PRE) complex, thus giving elongation factor G a second chance to translocate the tRNAs correctly. Binds to ribosomes in a GTP-dependent manner. This is Elongation factor 4 from Neisseria meningitidis serogroup C / serotype 2a (strain ATCC 700532 / DSM 15464 / FAM18).